Here is a 234-residue protein sequence, read N- to C-terminus: Synaptogyrin-1 (234 aa).

Met1 is modified (N-acetylmethionine). The Cytoplasmic segment spans residues 1–23; it reads MEGGAYGAGKAGGAFDPYALVRQ. An MARVEL domain is found at 20–173; it reads LVRQPHTILR…QAVLAFQRYQ (154 aa). A helical transmembrane segment spans residues 24–44; that stretch reads PHTILRVVSWLFSIVVFGSIV. The Lumenal portion of the chain corresponds to 45–71; it reads NEGYLNSASEGEEFCIYNRNPNACSYG. The helical transmembrane segment at 72–92 threads the bilayer; the sequence is VAVGVLAFLTCLLYLALDVYF. At 93 to 103 the chain is on the cytoplasmic side; the sequence is PQISSVKDRKK. The helical transmembrane segment at 104 to 124 threads the bilayer; the sequence is AVLSDIGVSAFWAFLWFVGFC. The Lumenal segment spans residues 125–148; sequence YLANQWQVSKPKDNPLNEGTDAAR. The chain crosses the membrane as a helical span at residues 149–169; that stretch reads AAIAFSFFSIFTWAGQAVLAF. Residues 170–234 are Cytoplasmic-facing; the sequence is QRYQIGADSA…EPQGYQSQGY (65 aa). The tract at residues 192–234 is disordered; the sequence is SSMPYAPYVEPSTGPDPAGMGGTYQQPANTFDTEPQGYQSQGY. The span at 214-234 shows a compositional bias: polar residues; the sequence is TYQQPANTFDTEPQGYQSQGY.

This sequence belongs to the synaptogyrin family.

Its subcellular location is the cytoplasmic vesicle. The protein resides in the secretory vesicle. The protein localises to the synaptic vesicle membrane. It localises to the melanosome. May play a role in regulated exocytosis. Modulates the localization of synaptophysin/SYP into synaptic-like microvesicles and may therefore play a role in synaptic-like microvesicle formation and/or maturation. Involved in the regulation of short-term and long-term synaptic plasticity. This is Synaptogyrin-1 from Pongo abelii (Sumatran orangutan).